The following is a 351-amino-acid chain: UDP-N-acetylglucosamine--N-acetylmuramyl-(pentapeptide) pyrophosphoryl-undecaprenol N-acetylglucosamine transferase (351 aa).

UDP-N-acetyl-alpha-D-glucosamine contacts are provided by residues 12–14 (TGG), asparagine 124, arginine 160, serine 188, isoleucine 239, 258–263 (ALTVCE), and glutamine 283.

Belongs to the glycosyltransferase 28 family. MurG subfamily.

It localises to the cell inner membrane. The catalysed reaction is di-trans,octa-cis-undecaprenyl diphospho-N-acetyl-alpha-D-muramoyl-L-alanyl-D-glutamyl-meso-2,6-diaminopimeloyl-D-alanyl-D-alanine + UDP-N-acetyl-alpha-D-glucosamine = di-trans,octa-cis-undecaprenyl diphospho-[N-acetyl-alpha-D-glucosaminyl-(1-&gt;4)]-N-acetyl-alpha-D-muramoyl-L-alanyl-D-glutamyl-meso-2,6-diaminopimeloyl-D-alanyl-D-alanine + UDP + H(+). It functions in the pathway cell wall biogenesis; peptidoglycan biosynthesis. In terms of biological role, cell wall formation. Catalyzes the transfer of a GlcNAc subunit on undecaprenyl-pyrophosphoryl-MurNAc-pentapeptide (lipid intermediate I) to form undecaprenyl-pyrophosphoryl-MurNAc-(pentapeptide)GlcNAc (lipid intermediate II). This is UDP-N-acetylglucosamine--N-acetylmuramyl-(pentapeptide) pyrophosphoryl-undecaprenol N-acetylglucosamine transferase from Actinobacillus pleuropneumoniae serotype 7 (strain AP76).